A 178-amino-acid polypeptide reads, in one-letter code: Napin-B (178 aa).

An N-terminal signal peptide occupies residues 1–21 (MANKLFLVSATLAFFFLLTNA). Propeptides lie at residues 22–38 (SIYR…ATNP) and 75–94 (PSWT…NPQG).

This sequence belongs to the 2S seed storage albumins family. In terms of assembly, the mature protein consists of a small and a large chain linked by disulfide bonds. As to expression, cotyledons and the axis.

In terms of biological role, the small, basic, water-soluble napins are one of the two major kinds of storage proteins synthesized in the seed during its maturation. The protein is Napin-B (NAPB) of Brassica napus (Rape).